The sequence spans 33 residues: MSDIN-like toxin proprotein 1 (33 aa).

Positions 1-10 are excised as a propeptide; sequence MSDINATRLP. The cyclopeptide (Ile-Pro) cross-link spans 11-18; that stretch reads IIWAPVVP. The propeptide occupies 19-33; the sequence is CISDDNDSTLTRGQR.

This sequence belongs to the MSDIN fungal toxin family. In terms of processing, processed by the macrocyclase-peptidase enzyme POPB to yield a toxic cyclic octapeptide. POPB first removes 10 residues from the N-terminus. Conformational trapping of the remaining peptide forces the enzyme to release this intermediate rather than proceed to macrocyclization. The enzyme rebinds the remaining peptide in a different conformation and catalyzes macrocyclization of the N-terminal 8 residues.

In terms of biological role, probable toxin that belongs to the MSDIN-like toxin family responsible for a large number of food poisoning cases and deaths. The chain is MSDIN-like toxin proprotein 1 from Amanita fuliginea (East Asian brown death cap).